We begin with the raw amino-acid sequence, 361 residues long: G kinase-anchoring protein 1-A (361 aa).

Disordered regions lie at residues 22 to 111 (DSSS…EDWQ) and 140 to 183 (FEES…KDFQ). Over residues 35–48 (AHSSGKAHSGSAAR) the composition is skewed to low complexity. A coiled-coil region spans residues 51-79 (NKGNEKKKEKRRKKKEQQQSEANELRNLA). Over residues 158–168 (KVNKKDKRKNN) the composition is skewed to basic residues. Coiled coils occupy residues 246 to 296 (KDGR…QEGE) and 326 to 346 (AALE…VKYQ).

The protein belongs to the GKAP1 family.

Its subcellular location is the golgi apparatus. Its function is as follows. May play a role in the regulation of insulin-dependent IRS1 tyrosine phosphorylation in adipocytes. This is G kinase-anchoring protein 1-A (gkap1-a) from Xenopus laevis (African clawed frog).